The primary structure comprises 274 residues: Diaminopimelate epimerase (274 aa).

Positions 11, 44, and 64 each coordinate substrate. Cys73 acts as the Proton donor in catalysis. Substrate is bound by residues Gly74–Asn75, Asn157, Asn190, and Glu208–Arg209. Cys217 functions as the Proton acceptor in the catalytic mechanism. Residue Gly218–Ser219 coordinates substrate.

This sequence belongs to the diaminopimelate epimerase family. In terms of assembly, homodimer (Potential). Previously DapF has been proposed to be a monomer, however it seems that it adopts a dimeric structure.

The protein resides in the cytoplasm. It carries out the reaction (2S,6S)-2,6-diaminopimelate = meso-2,6-diaminopimelate. The protein operates within amino-acid biosynthesis; L-lysine biosynthesis via DAP pathway; DL-2,6-diaminopimelate from LL-2,6-diaminopimelate: step 1/1. With respect to regulation, inhibited by LL-aziridino (LL-AziDAP), DL-aziridino (DL-AziDAP). Also inhibited by (2S,3R,6S)-2,6-diamino-3-fluoropimelate (L,L-3-fluoro-DAP) and (2R,3S,6S)-2,6-diamino-3-fluoropimelate (D,L-3-fluoro-DAP). Its function is as follows. Catalyzes the stereoinversion of LL-2,6-diaminopimelate (L,L-DAP) to meso-diaminopimelate (meso-DAP), a precursor of L-lysine and an essential component of the bacterial peptidoglycan. Only accepts DAP isomers with the L configuration. The polypeptide is Diaminopimelate epimerase (Haemophilus influenzae (strain ATCC 51907 / DSM 11121 / KW20 / Rd)).